The sequence spans 273 residues: Undecaprenyl-diphosphatase (273 aa).

The next 7 helical transmembrane spans lie at 13 to 35 (GLVEGFTEFLPISSTGHLIVFGN), 45 to 62 (VFEIAIQLGAVLAVVFEY), 82 to 102 (FVLNLAIAFIPAAVMGLLFDK), 108 to 128 (LFNPLSVAVMLVLGGFFILWV), 186 to 206 (TEFSFFLAVPMMVAATAYDVL), 219 to 239 (LILIGFIAAFVSGLVAVKALL), and 250 to 270 (FAYYRIVFGIVIIILWLSGWI).

Belongs to the UppP family.

The protein resides in the cell inner membrane. The catalysed reaction is di-trans,octa-cis-undecaprenyl diphosphate + H2O = di-trans,octa-cis-undecaprenyl phosphate + phosphate + H(+). Catalyzes the dephosphorylation of undecaprenyl diphosphate (UPP). Confers resistance to bacitracin. The polypeptide is Undecaprenyl-diphosphatase (Neisseria gonorrhoeae (strain NCCP11945)).